Consider the following 365-residue polypeptide: MKLLHFTILLQVSLFPASSLAQAGGNNTEVQVQQTLPGTGIAAVNSVNLLRIYSQDTSGGIREARFEGYWSGGLANDTIAKARANSSIAAASDDLELYKSSSSTNFLLKIRVYYLLPNNTLGEAASDSQSRWYTGSLNQYNFQVASHSRLAAVFVPSTQRPRLRIYAQLGDNTIQEFGYDVSPLSQLEPMFANYLKVGRGWQRLANFGPALPGTGIAALTYTTGLRRSTTRVYFQTTDRRVVERVYDNRSWSDGGTVVRTAKPRTPLAATSFLLTPGNPQSVRVYYGTEDNRILEKGTEGGTYWYDGAFEHSAIPDSQVAAVDWGNGGVFNIRLYIQDGAFKNGISEWAWFRRSWRRGILAIPPA.

A signal peptide spans 1 to 21 (MKLLHFTILLQVSLFPASSLA). 6 consecutive repeat copies span residues 22–79 (QAGG…NDTI), 80–141 (AKAR…NQYN), 142–206 (FQVA…RLAN), 207–261 (FGPA…VRTA), 262–309 (KPRT…DGAF), and 310–365 (EHSA…IPPA). The 6 X approximate tandem repeats stretch occupies residues 22 to 365 (QAGGNNTEVQ…RRGILAIPPA (344 aa)). A glycan (N-linked (GlcNAc...) asparagine) is linked at N26. Residues R51, E63, and W70 each coordinate beta-L-fucose. 2 N-linked (GlcNAc...) asparagine glycosylation sites follow: N76 and N85. Beta-L-fucose is bound at residue R111. N-linked (GlcNAc...) asparagine glycosylation is present at N118. Positions 123, 132, 164, 176, 201, and 231 each coordinate beta-L-fucose. N248 carries N-linked (GlcNAc...) asparagine glycosylation. R283, R333, and E347 together coordinate beta-L-fucose.

This sequence belongs to the fungal fucose-specific lectin family. Homodimer.

The protein resides in the secreted. Functionally, probable L-fucose-binding lectin. This Arthroderma benhamiae (strain ATCC MYA-4681 / CBS 112371) (Trichophyton mentagrophytes) protein is Fucose-specific lectin.